The chain runs to 129 residues: Small ribosomal subunit protein uS11 (129 aa).

It belongs to the universal ribosomal protein uS11 family. In terms of assembly, part of the 30S ribosomal subunit. Interacts with proteins S7 and S18. Binds to IF-3.

Its function is as follows. Located on the platform of the 30S subunit, it bridges several disparate RNA helices of the 16S rRNA. Forms part of the Shine-Dalgarno cleft in the 70S ribosome. The protein is Small ribosomal subunit protein uS11 of Carboxydothermus hydrogenoformans (strain ATCC BAA-161 / DSM 6008 / Z-2901).